The primary structure comprises 296 residues: 2-dehydropantoate 2-reductase (296 aa).

NADP(+) is bound by residues Gly7–Gly12, Asn94, and Ala120. Asn94 provides a ligand contact to substrate. Lys175 (proton donor) is an active-site residue. Substrate contacts are provided by Asn179, Asn183, Asn193, and Ser245. Residue Glu257 participates in NADP(+) binding.

The protein belongs to the ketopantoate reductase family.

The protein localises to the cytoplasm. It catalyses the reaction (R)-pantoate + NADP(+) = 2-dehydropantoate + NADPH + H(+). It functions in the pathway cofactor biosynthesis; (R)-pantothenate biosynthesis; (R)-pantoate from 3-methyl-2-oxobutanoate: step 2/2. Its function is as follows. Catalyzes the NADPH-dependent reduction of ketopantoate into pantoic acid. This Vibrio cholerae serotype O1 (strain ATCC 39315 / El Tor Inaba N16961) protein is 2-dehydropantoate 2-reductase (panE).